A 266-amino-acid chain; its full sequence is Undecaprenyl-diphosphatase (266 aa).

8 consecutive transmembrane segments (helical) span residues 1–21, 39–59, 86–106, 117–137, 153–173, 190–210, 216–236, and 246–266; these read MDFL…FIPV, PGSS…FWYF, SIFI…LFVT, FSIA…DIST, FIGI…GATI, SFLL…ITSI, FPFL…LLAI, and NGLK…ILNL.

This sequence belongs to the UppP family.

The protein localises to the cell inner membrane. The enzyme catalyses di-trans,octa-cis-undecaprenyl diphosphate + H2O = di-trans,octa-cis-undecaprenyl phosphate + phosphate + H(+). Catalyzes the dephosphorylation of undecaprenyl diphosphate (UPP). Confers resistance to bacitracin. In Prochlorococcus marinus (strain MIT 9515), this protein is Undecaprenyl-diphosphatase.